A 142-amino-acid polypeptide reads, in one-letter code: Glia maturation factor gamma (142 aa).

Position 2 is an N-acetylserine (serine 2). Residues serine 4–alanine 139 form the ADF-H domain.

It belongs to the actin-binding proteins ADF family. GMF subfamily. In terms of tissue distribution, expressed in rat thymus, testis, and spleen. Is present predominantly in proliferative and differentiative organs.

This Rattus norvegicus (Rat) protein is Glia maturation factor gamma (Gmfg).